A 182-amino-acid chain; its full sequence is MGESITAPEVRLINSDGGPLGVVSRSVALRLAGEVGLDLVEVSPFSKPPVVKIMDYGKFRYEASQKAKEARRRQSGVSVKEVRFRLKICDNDYDVKLRKAISFLQAGDKVKVMILFRGREQSRPELGVKLLKKFADDISEFGSADSLSRTDGRGMAIMVSPIKSKTIVREKSSHAQKGDKQP.

It belongs to the IF-3 family. Monomer.

Its subcellular location is the cytoplasm. Functionally, IF-3 binds to the 30S ribosomal subunit and shifts the equilibrium between 70S ribosomes and their 50S and 30S subunits in favor of the free subunits, thus enhancing the availability of 30S subunits on which protein synthesis initiation begins. The chain is Translation initiation factor IF-3 from Tropheryma whipplei (strain TW08/27) (Whipple's bacillus).